The following is a 76-amino-acid chain: Defensin-like protein 155 (76 aa).

A signal peptide spans 1–27 (MAKISCSYLLILMLALSVFSVVEKAKG). 4 disulfide bridges follow: C31–C76, C40–C59, C45–C70, and C49–C72.

The protein belongs to the DEFL family.

It is found in the secreted. The protein is Defensin-like protein 155 (LCR36) of Arabidopsis thaliana (Mouse-ear cress).